Reading from the N-terminus, the 212-residue chain is uncharacterized protein (212 aa).

Belongs to the methyltransferase superfamily.

This is an uncharacterized protein from Synechocystis sp. (strain ATCC 27184 / PCC 6803 / Kazusa).